Here is a 357-residue protein sequence, read N- to C-terminus: Pheromone receptor 1 (357 aa).

7 consecutive transmembrane segments (helical) span residues 5–25 (ITPF…AWHI), 32–52 (LIML…NSMV), 67–90 (LSVR…ARKL), 110–130 (VIID…LMIV), 145–165 (WPMM…VIVV), 206–226 (LLLL…GTIA), and 268–288 (LILA…MFGL). Residues 338–357 (ANTSTKSEKSDIDMRGSEAA) form a disordered region. The span at 343–357 (KSEKSDIDMRGSEAA) shows a compositional bias: basic and acidic residues.

The protein belongs to the G-protein coupled receptor 4 family.

It localises to the membrane. In terms of biological role, receptor for the A2 pheromone, a prenylated mating factor. This is Pheromone receptor 1 (PRA1) from Mycosarcoma maydis (Corn smut fungus).